Here is a 209-residue protein sequence, read N- to C-terminus: Large ribosomal subunit protein uL3 (209 aa).

N5-methylglutamine is present on Q150.

The protein belongs to the universal ribosomal protein uL3 family. As to quaternary structure, part of the 50S ribosomal subunit. Forms a cluster with proteins L14 and L19. In terms of processing, methylated by PrmB.

Its function is as follows. One of the primary rRNA binding proteins, it binds directly near the 3'-end of the 23S rRNA, where it nucleates assembly of the 50S subunit. The polypeptide is Large ribosomal subunit protein uL3 (Buchnera aphidicola subsp. Schizaphis graminum (strain Sg)).